We begin with the raw amino-acid sequence, 292 residues long: NAD kinase (292 aa).

Asp-73 acts as the Proton acceptor in catalysis. Residues 73 to 74, 147 to 148, His-158, Arg-175, Asp-177, 188 to 193, and Gln-247 each bind NAD(+); these read DG, NE, and TAYSLS.

The protein belongs to the NAD kinase family. A divalent metal cation is required as a cofactor.

The protein localises to the cytoplasm. It catalyses the reaction NAD(+) + ATP = ADP + NADP(+) + H(+). In terms of biological role, involved in the regulation of the intracellular balance of NAD and NADP, and is a key enzyme in the biosynthesis of NADP. Catalyzes specifically the phosphorylation on 2'-hydroxyl of the adenosine moiety of NAD to yield NADP. This Enterobacter sp. (strain 638) protein is NAD kinase.